The following is a 166-amino-acid chain: EEF1A lysine methyltransferase 1 (166 aa).

Belongs to the class I-like SAM-binding methyltransferase superfamily. EFM5 family.

It is found in the cytoplasm. The enzyme catalyses L-lysyl-[protein] + 3 S-adenosyl-L-methionine = N(6),N(6),N(6)-trimethyl-L-lysyl-[protein] + 3 S-adenosyl-L-homocysteine + 3 H(+). Protein-lysine methyltransferase that selectively catalyzes the trimethylation of EEF1A at 'Lys-79'. The chain is EEF1A lysine methyltransferase 1 from Danio rerio (Zebrafish).